Here is a 277-residue protein sequence, read N- to C-terminus: Mannosyl-3-phosphoglycerate phosphatase (277 aa).

Asp-13 serves as the catalytic Nucleophile. 3 residues coordinate Mg(2+): Asp-13, Asp-15, and Asp-219.

This sequence belongs to the HAD-like hydrolase superfamily. MPGP family. It depends on Mg(2+) as a cofactor.

It localises to the cytoplasm. It carries out the reaction 2-O-(alpha-D-mannosyl)-3-phosphoglycerate + H2O = (2R)-2-O-(alpha-D-mannosyl)-glycerate + phosphate. The protein operates within carbohydrate biosynthesis; 2-(alpha-D-mannosyl)-D-glycerate biosynthesis; 2-(alpha-D-mannosyl)-D-glycerate from GDP-alpha-D-mannose (MPG route): step 2/2. In terms of biological role, hydrolyzes mannosyl-3-phosphoglycerate (MPG) to form the osmolyte mannosylglycerate (MG). The chain is Mannosyl-3-phosphoglycerate phosphatase from Aeropyrum pernix (strain ATCC 700893 / DSM 11879 / JCM 9820 / NBRC 100138 / K1).